The following is a 1015-amino-acid chain: Fibronectin-binding protein A (1015 aa).

Residues 1 to 36 (MKNNLRYGIRKHKLGAASVFLGTMIVVGMGQDKEAA) form the signal peptide. The YSIRK-G/S signaling motif signature appears at 7-18 (YGIRKHKLGAAS). A ligand-binding A region region spans residues 37 to 512 (ASEQKTTTVE…SNKADGNGKN (476 aa)). Residues 75 to 92 (SYSATATEQPSNATQVTT) are compositionally biased toward polar residues. Residues 75 to 199 (SYSATATEQP…KVETGTDVTS (125 aa)) are disordered. The segment covering 112–126 (TVKEEVVKEEAKPQV) has biased composition (basic and acidic residues). Residues 129–139 (TTQSQDNSGDQ) show a composition bias toward polar residues. A compositionally biased stretch (basic and acidic residues) spans 179 to 193 (DVVEAKEASDEKVET). The fibrinogen/elastin/tropoelastin-binding stretch occupies residues 194 to 512 (GTDVTSKVTV…SNKADGNGKN (319 aa)). The tract at residues 513-873 (GQIIQNNDFE…EGQQTIEEDT (361 aa)) is fibronectin-binding. A B-1 repeat occupies 546 to 575 (ENQDNTPLDIDYHTAIDGEGGYVDGYIETI). Residues 546–605 (ENQDNTPLDIDYHTAIDGEGGYVDGYIETIEETDSSAIDIDYHTAVDSEAGHVGGYTESS) are 2 X approximate tandem repeats. The stretch at 576-605 (EETDSSAIDIDYHTAVDSEAGHVGGYTESS) is one B-2 repeat. Disordered regions lie at residues 596 to 623 (GHVG…NSKH), 741 to 815 (LGYE…IDFD), 828 to 953 (EIIE…GKVV), and 966 to 992 (VAPT…NKGM). The stretch at 746–783 (GQNSGNQSFEEDTEEDKPKYEQGGNIVDIDFDSVPQIQ) is one D-1 repeat. The 4 X approximate tandem repeats stretch occupies residues 746 to 875 (GQNSGNQSFE…QQTIEEDTTP (130 aa)). The span at 780-791 (PQIQGQNNGNQS) shows a compositional bias: polar residues. One copy of the D-2 repeat lies at 784–821 (GQNNGNQSFEEDTEKDKPKYEQGGNIIDIDFDSVPQIH). The D-3 repeat unit spans residues 822–860 (GFNKHTEIIEEDTNKDKPNYQFGGHNSVDFEEDTLPKVS). Basic and acidic residues predominate over residues 828–839 (EIIEEDTNKDKP). A D-4; truncated repeat occupies 861–875 (GQNEGQQTIEEDTTP). The segment covering 875-935 (PPTPPTPEVP…PAEPGKPVPP (61 aa)) has biased composition (pro residues). WR repeat units lie at residues 876 to 889 (PTPP…EPET), 890 to 903 (PTPP…EPET), 904 to 917 (PTPP…EPET), 918 to 931 (PTPP…EPGK), and 932 to 945 (PVPP…KPSK). The interval 876–945 (PTPPTPEVPS…AKEEPKKPSK (70 aa)) is 5 X tandem repeats, Pro-rich (WR). The short motif at 979–983 (LPETG) is the LPXTG sorting signal element. Pentaglycyl murein peptidoglycan amidated threonine is present on Thr982. Positions 983 to 1015 (GGEESTNKGMLFGGLFSILGLALLRRNKKNNKA) are cleaved as a propeptide — removed by sortase.

It localises to the secreted. The protein localises to the cell wall. Its function is as follows. Promotes bacterial attachment to multiple substrates, such as fibronectin (Fn), fibrinogen (Fg), elastin peptides and tropoelastin. This confers to S.aureus the ability to invade endothelial cells. Promotes adherence to and aggregation of activated platelets. This is Fibronectin-binding protein A (fnbA) from Staphylococcus aureus (strain MSSA476).